Here is an 834-residue protein sequence, read N- to C-terminus: Probable basic-leucine zipper transcription factor D (834 aa).

Positions 83–160 are disordered; that stretch reads NNNNMLNDHS…SNNNSSSEGE (78 aa). The span at 90-111 shows a compositional bias: polar residues; that stretch reads DHSSSPMRVPNSSPSLYNNSIE. The segment covering 119–157 has biased composition (low complexity); that stretch reads DNSNNNNNNNNNINVNDINVNDINSNSTNNNESNNNSSS. Positions 211 to 246 form a coiled coil; that stretch reads SEQQQQQQQQQQQQQQQQQQQQQQQQQHQHLLQEHQ. Residues 378 to 405 form a disordered region; the sequence is VVDPPTHNQEDERNVKKQRRLIKNRESA. In terms of domain architecture, bZIP spans 391–454; it reads NVKKQRRLIK…KQLAAQNSNS (64 aa). The interval 393–402 is basic motif; it reads KKQRRLIKNR. The leucine-zipper stretch occupies residues 407-414; sequence LSRMRKKI. Disordered stretches follow at residues 455-504 and 550-712; these read NNNS…QQQS and LSMS…KTPQ. Positions 550–595 are enriched in polar residues; the sequence is LSMSDSESSPQKSLRLSSNHHSLPDGTFNTIPIDQQTTATTNTKSL. 2 stretches are compositionally biased toward low complexity: residues 616–651 and 694–707; these read NNNN…NNNN and TTTT…TTST.

It belongs to the bZIP family.

The protein resides in the nucleus. Probable transcriptional regulator. The protein is Probable basic-leucine zipper transcription factor D (bzpD) of Dictyostelium discoideum (Social amoeba).